Here is a 364-residue protein sequence, read N- to C-terminus: O-methyltransferase 1 (364 aa).

S-adenosyl-L-homocysteine-binding residues include serine 183, glycine 207, aspartate 230, aspartate 250, and lysine 264. Aspartate 230 serves as a coordination point for S-adenosyl-L-methionine. Histidine 268 serves as the catalytic Proton acceptor.

Belongs to the class I-like SAM-binding methyltransferase superfamily. Cation-independent O-methyltransferase family. Homodimer.

The catalysed reaction is dopamine + S-adenosyl-L-methionine = 3-methoxytyramine + S-adenosyl-L-homocysteine + H(+). It catalyses the reaction 3,4-dihydroxy-5-methoxyphenethylamine + S-adenosyl-L-methionine = 4-hydroxy-3,5-dimethoxyphenethylamine + S-adenosyl-L-homocysteine + H(+). The protein operates within aromatic compound metabolism. It functions in the pathway alkaloid biosynthesis. In terms of biological role, O-methyltransferase participating in the biosynthesis of natural products derived from phenylethylamine, including mescaline, a natural hallucinogen potentially used in psychotherapeutic treatments. Catalyzes the O-methylation of mescaline meta hydroxyl groups, using dopamine and 3,4-dihydroxy-5-methoxyphenethylamine as substrates. The protein is O-methyltransferase 1 of Lophophora williamsii (Peyote).